Consider the following 1377-residue polypeptide: Carboxypeptidase D (1377 aa).

An N-terminal signal peptide occupies residues 1 to 37 (MASGRDERPPWRLGRLRLLPPPPLLLLLLLLRSSAQA). Residues 38 to 1296 (AHIKKAEATT…DNRIFGLPRE (1259 aa)) lie on the Extracellular side of the membrane. The Peptidase M14 1 domain occupies 62 to 379 (HYYHEAALGE…ESLITLIEKV (318 aa)). Residues histidine 138 and glutamate 141 each contribute to the Zn(2+) site. Residues 161–163 (RGD) carry the Cell attachment site motif. N-linked (GlcNAc...) asparagine glycosylation is found at asparagine 171 and asparagine 216. The tract at residues 188 to 231 (RAREGDCGLGDSGPPGTSGRDNSRGRDLNRSFPDQFSTGEPPSL) is disordered. Histidine 256 lines the Zn(2+) pocket. Residue tyrosine 264 is modified to Phosphotyrosine. Phosphoserine is present on serine 269. Glutamate 349 acts as the Proton donor/acceptor in catalysis. 4 N-linked (GlcNAc...) asparagine glycosylation sites follow: asparagine 398, asparagine 409, asparagine 428, and asparagine 521. Residues 501-791 (HHHHFPDMEI…RSLIQFMKQV (291 aa)) form the Peptidase M14 2 domain. The Zn(2+) site is built by histidine 563 and glutamate 566. A glycan (N-linked (GlcNAc...) asparagine) is linked at asparagine 625. Residue histidine 670 participates in Zn(2+) binding. Glutamate 761 acts as the Proton donor/acceptor in catalysis. N-linked (GlcNAc...) asparagine glycans are attached at residues asparagine 810, asparagine 854, asparagine 866, asparagine 878, asparagine 952, and asparagine 975. Positions 874–898 (ADANNESKKGRGHSTSTDDTSDPTS) are disordered. The Peptidase M14 3 domain occupies 929 to 1208 (RYHSYKDLSE…KSLLSMLVEV (280 aa)). The segment covering 1038-1047 (RERAQEKDCT) has biased composition (basic and acidic residues). The disordered stretch occupies residues 1038–1064 (RERAQEKDCTSKTGHTNAHGKDLDTDF). N-linked (GlcNAc...) asparagine glycosylation is found at asparagine 1067 and asparagine 1139. Residues 1297 to 1317 (LVVTVSGATMSALILTACIIW) traverse the membrane as a helical segment. Residues cysteine 1314, cysteine 1318, and cysteine 1320 are each lipidated (S-palmitoyl cysteine). At 1318–1377 (CICSIKSNRHKDGFHRLRQHHDEYEDEIRMMSTGSKKSLLSHEFQDETDTEEETLYSSKH) the chain is on the cytoplasmic side. 2 positions are modified to phosphoserine: serine 1355 and serine 1358. Positions 1356–1377 (LLSHEFQDETDTEEETLYSSKH) are disordered. Phosphothreonine occurs at positions 1365 and 1367.

This sequence belongs to the peptidase M14 family. The cofactor is Zn(2+).

It is found in the cell membrane. It catalyses the reaction Releases C-terminal Arg and Lys from polypeptides.. This is Carboxypeptidase D (Cpd) from Mus musculus (Mouse).